Here is a 425-residue protein sequence, read N- to C-terminus: Gamma-glutamyl phosphate reductase (425 aa).

Belongs to the gamma-glutamyl phosphate reductase family.

The protein localises to the cytoplasm. The enzyme catalyses L-glutamate 5-semialdehyde + phosphate + NADP(+) = L-glutamyl 5-phosphate + NADPH + H(+). Its pathway is amino-acid biosynthesis; L-proline biosynthesis; L-glutamate 5-semialdehyde from L-glutamate: step 2/2. In terms of biological role, catalyzes the NADPH-dependent reduction of L-glutamate 5-phosphate into L-glutamate 5-semialdehyde and phosphate. The product spontaneously undergoes cyclization to form 1-pyrroline-5-carboxylate. The sequence is that of Gamma-glutamyl phosphate reductase from Aromatoleum aromaticum (strain DSM 19018 / LMG 30748 / EbN1) (Azoarcus sp. (strain EbN1)).